Consider the following 210-residue polypeptide: Large ribosomal subunit protein uL4 (210 aa).

Polar residues predominate over residues 41–51 (QNNARQGNASA). The tract at residues 41–77 (QNNARQGNASAKTRAEVRGGGRKPWKQKGTGRARAGS) is disordered. Residues 60-71 (GGRKPWKQKGTG) are compositionally biased toward basic residues.

This sequence belongs to the universal ribosomal protein uL4 family. As to quaternary structure, part of the 50S ribosomal subunit.

In terms of biological role, one of the primary rRNA binding proteins, this protein initially binds near the 5'-end of the 23S rRNA. It is important during the early stages of 50S assembly. It makes multiple contacts with different domains of the 23S rRNA in the assembled 50S subunit and ribosome. Forms part of the polypeptide exit tunnel. The protein is Large ribosomal subunit protein uL4 of Synechocystis sp. (strain ATCC 27184 / PCC 6803 / Kazusa).